We begin with the raw amino-acid sequence, 601 residues long: HMG domain-containing protein 4 (601 aa).

Residue Lys-8 forms a Glycyl lysine isopeptide (Lys-Gly) (interchain with G-Cter in SUMO2) linkage. 2 disordered regions span residues 51 to 410 (VRNS…KKKN) and 473 to 514 (TTVK…ASPA). Residues 82 to 93 (DYYYGDISSLES) are compositionally biased toward low complexity. Ser-102 is modified (phosphoserine). Lys-191 participates in a covalent cross-link: Glycyl lysine isopeptide (Lys-Gly) (interchain with G-Cter in SUMO2). At Ser-197 the chain carries Phosphoserine. Composition is skewed to polar residues over residues 212 to 221 (QYPSQQATVK) and 270 to 282 (DASQ…SANL). Residues 316 to 344 (IKKKKKSKKSKKKKDKEKHKEKRHSKSKR) are compositionally biased toward basic residues. Positions 394–404 (EEKDKERERGE) are enriched in basic and acidic residues. The segment at residues 407–475 (KKKNMSAYQV…KQNKAEATTV (69 aa)) is a DNA-binding region (HMG box). Residues Ser-497, Ser-502, and Ser-512 each carry the phosphoserine modification.

It localises to the nucleus. Functionally, negatively regulates Wnt/beta-catenin signaling during development. The sequence is that of HMG domain-containing protein 4 (HMGXB4) from Homo sapiens (Human).